The primary structure comprises 364 residues: Alanine racemase (364 aa).

K34 functions as the Proton acceptor; specific for D-alanine in the catalytic mechanism. N6-(pyridoxal phosphate)lysine is present on K34. R129 is a binding site for substrate. The active-site Proton acceptor; specific for L-alanine is the Y259. Residue M307 participates in substrate binding.

Belongs to the alanine racemase family. Requires pyridoxal 5'-phosphate as cofactor.

It catalyses the reaction L-alanine = D-alanine. It functions in the pathway amino-acid biosynthesis; D-alanine biosynthesis; D-alanine from L-alanine: step 1/1. Catalyzes the interconversion of L-alanine and D-alanine. May also act on other amino acids. This chain is Alanine racemase (alr), found in Coxiella burnetii (strain CbuK_Q154) (Coxiella burnetii (strain Q154)).